The sequence spans 794 residues: Signal transducer and activator of transcription 5A (794 aa).

At Y90 the chain carries Phosphotyrosine. A phosphoserine mark is found at S128 and S193. The SH2 domain maps to 589 to 686; the sequence is WNDGAILGFV…EVFSKYYTPV (98 aa). Y682 carries the post-translational modification Phosphotyrosine. Y694 carries the post-translational modification Phosphotyrosine; by JAK2. The interval 773–794 is disordered; that stretch reads DSLDSRLSPPAGLFTSARGSLS. S780 is subject to Phosphoserine.

Belongs to the transcription factor STAT family. Forms a homodimer or a heterodimer with a related family member. Binds NR3C1. Interacts with NCOA1 and SOCS7. Interacts with ERBB4. Interacts with EBF4. Interacts with CD69. Post-translationally, tyrosine phosphorylated in response to KITLG/SCF, IL2, IL3, IL7, IL15, CSF2/GMCSF, GH1, PRL, EPO and THPO. Activated KIT promotes phosphorylation on tyrosine residues and subsequent translocation to the nucleus. Tyrosine phosphorylated in response to constitutively activated FGFR1, FGFR2, FGFR3 and FGFR4. Tyrosine phosphorylation is required for DNA-binding activity and dimerization. Serine phosphorylation is also required for maximal transcriptional activity. Tyrosine phosphorylated in response to signaling via activated FLT3; wild-type FLT3 results in much weaker phosphorylation than constitutively activated mutant FLT3. Alternatively, can be phosphorylated by JAK2 at Tyr-694. In terms of processing, ISGylated.

The protein resides in the cytoplasm. Its subcellular location is the nucleus. Functionally, carries out a dual function: signal transduction and activation of transcription. Mediates cellular responses to the cytokine KITLG/SCF and other growth factors. Mediates cellular responses to ERBB4. May mediate cellular responses to activated FGFR1, FGFR2, FGFR3 and FGFR4. Binds to the GAS element and activates PRL-induced transcription. Regulates the expression of milk proteins during lactation. The polypeptide is Signal transducer and activator of transcription 5A (STAT5A) (Homo sapiens (Human)).